The primary structure comprises 663 residues: DNA topoisomerase 4 subunit B (663 aa).

Residues Tyr-7, Asn-47, Asp-74, 114 to 120, and Lys-341 each bind ATP; that span reads GLHGVGA. Residues 386 to 416 form a disordered region; that stretch reads REAARKAREDARSGKKNKRKDTLLSGKLTPA. The segment covering 387–398 has biased composition (basic and acidic residues); the sequence is EAARKAREDARS. Positions 424–538 constitute a Toprim domain; it reads NELYLVEGDS…ADRVFIALPP (115 aa). 3 residues coordinate Mg(2+): Glu-430, Asp-503, and Asp-505.

It belongs to the type II topoisomerase family. ParE type 2 subfamily. Heterotetramer composed of ParC and ParE. The cofactor is Mg(2+). It depends on Mn(2+) as a cofactor. Ca(2+) serves as cofactor.

It carries out the reaction ATP-dependent breakage, passage and rejoining of double-stranded DNA.. Its function is as follows. Topoisomerase IV is essential for chromosome segregation. It relaxes supercoiled DNA. Performs the decatenation events required during the replication of a circular DNA molecule. The protein is DNA topoisomerase 4 subunit B of Staphylococcus aureus (strain MSSA476).